The following is a 187-amino-acid chain: Phosphatidylethanolamine-binding protein 1 (187 aa).

Phosphoserine occurs at positions 6 and 13. Residue Thr42 is modified to Phosphothreonine. Phosphoserine is present on residues Ser52 and Ser98. The interval 93-134 is interaction with RAF1; the sequence is KGGNISSGTVLSDYVGSGPPKGTGLHRYVWLVYEQDGPLKCD.

The protein belongs to the phosphatidylethanolamine-binding protein family. As to quaternary structure, has a tendency to form dimers by disulfide cross-linking. Interacts with RAF1 and this interaction is enhanced if RAF1 is phosphorylated on residues 'Ser-338', 'Ser-339', 'Tyr-340' and 'Tyr-341'. Interacts with ALOX15; in response to IL13/interleukin-13, prevents the interaction of PEBP1 with RAF1 to activate the ERK signaling cascade.

Its subcellular location is the cytoplasm. Binds ATP, opioids and phosphatidylethanolamine. Has lower affinity for phosphatidylinositol and phosphatidylcholine. Serine protease inhibitor which inhibits thrombin, neuropsin and chymotrypsin but not trypsin, tissue type plasminogen activator and elastase. Inhibits the kinase activity of RAF1 by inhibiting its activation and by dissociating the RAF1/MEK complex and acting as a competitive inhibitor of MEK phosphorylation. Its function is as follows. HCNP may be involved in the function of the presynaptic cholinergic neurons of the central nervous system. HCNP increases the production of choline acetyltransferase but not acetylcholinesterase. Seems to be mediated by a specific receptor. The protein is Phosphatidylethanolamine-binding protein 1 (PEBP1) of Oryctolagus cuniculus (Rabbit).